The sequence spans 352 residues: Pejvakin (352 aa).

It belongs to the gasdermin family. As to quaternary structure, interacts with MAP1LC3B; interaction is direct. Interacts with IQGAP1. Interacts with ROCK2. Interacts with TRIOBP. In terms of tissue distribution, in ear, it is detected in the organ of Corti and the spiral ganglion within the cochlea in the sensory areas of the vestibule (cristae ampullares of the semicircular ducts, and maculae of the saccule and utricle) and in the first 3 relays (cochlear nuclei, superior olivary complex and inferior colliculus) of the afferent auditory pathway. Detected in hair cells of the cochlea and vestibule but not in neurons. In the afferent auditory pathway, it is present in the cell bodies of neurons but not in fiber bundles such as the trapezoid body in the brainstem. Also detected in spiral ganglion cells, which form the auditory nerve and project to the cochlear nuclei in the brainstem. Also present in the cochlear nuclei, the superior olive and the inferior colliculus (at protein level). Expressed in all the adult organs tested: brain, eye, inner ear, heart, lung, kidney, liver, intestine, testis and weakly in skeletal muscle.

Its subcellular location is the peroxisome membrane. The protein localises to the cell projection. The protein resides in the cilium. Peroxisome-associated protein required to protect auditory hair cells against noise-induced damage. Acts by regulating noise-induced peroxisome proliferation in auditory hair cells and neurons, and promoting autophagic degradation of damaged peroxisomes (pexophagy). Noise overexposure increases reactive oxygen species (ROS) levels, causing oxidative damage to auditory hair cells and resulting in hearing loss. PJVK acts as a ROS sensor that recruits the autophagy machinery to trigger pexophagy of peroxisomes damaged by oxidative stress. In addition to pexophagy, also required to promote peroxisome proliferation in response to sound overstimulation. The protein is Pejvakin of Mus musculus (Mouse).